The chain runs to 38 residues: Trypsin inhibitor 2 (38 aa).

Q1 is modified (pyrrolidone carboxylic acid).

Post-translationally, contains disulfide bonds.

Its function is as follows. Inhibits trypsin-like proteases from the guts of the insect pests P.truncatus, P.americana, Acheta sp and Gryllus sp. The chain is Trypsin inhibitor 2 from Opuntia streptacantha (Prickly pear cactus).